The chain runs to 165 residues: Large ribosomal subunit protein uL10 (165 aa).

It belongs to the universal ribosomal protein uL10 family. Part of the ribosomal stalk of the 50S ribosomal subunit. The N-terminus interacts with L11 and the large rRNA to form the base of the stalk. The C-terminus forms an elongated spine to which L12 dimers bind in a sequential fashion forming a multimeric L10(L12)X complex.

Its function is as follows. Forms part of the ribosomal stalk, playing a central role in the interaction of the ribosome with GTP-bound translation factors. This Buchnera aphidicola subsp. Acyrthosiphon pisum (strain 5A) protein is Large ribosomal subunit protein uL10.